We begin with the raw amino-acid sequence, 289 residues long: ATP synthase gamma chain (289 aa).

Belongs to the ATPase gamma chain family. In terms of assembly, F-type ATPases have 2 components, CF(1) - the catalytic core - and CF(0) - the membrane proton channel. CF(1) has five subunits: alpha(3), beta(3), gamma(1), delta(1), epsilon(1). CF(0) has three main subunits: a, b and c.

The protein resides in the cell inner membrane. Its function is as follows. Produces ATP from ADP in the presence of a proton gradient across the membrane. The gamma chain is believed to be important in regulating ATPase activity and the flow of protons through the CF(0) complex. The chain is ATP synthase gamma chain from Polynucleobacter necessarius subsp. necessarius (strain STIR1).